The chain runs to 202 residues: Regulator of G-protein signaling 16 (202 aa).

S-palmitoyl cysteine attachment occurs at residues Cys-2 and Cys-12. The 117-residue stretch at 65–181 folds into the RGS domain; that stretch reads SFDLLLSSKN…LKSPAYRDLA (117 aa). Tyr-168 bears the Phosphotyrosine; by EGFR mark. Tyr-177 bears the Phosphotyrosine mark. A disordered region spans residues 183 to 202; that stretch reads QATAASASPSSSSPAEPLHT.

In terms of assembly, interacts with GNAI1 and GNAQ. Interacts with GNAI3, GNAI3 and GNAO1. Post-translationally, palmitoylated on Cys-2 and/or Cys-12. Phosphorylated. Phosphorylation at Tyr-168 by EGFR enhances GTPase accelerating (GAP) activity toward GNAI1.

Its subcellular location is the membrane. Regulates G protein-coupled receptor signaling cascades. Inhibits signal transduction by increasing the GTPase activity of G protein alpha subunits, thereby driving them into their inactive GDP-bound form. Plays an important role in the phototransduction cascade by regulating the lifetime and effective concentration of activated transducin alpha. May regulate extra and intracellular mitogenic signals. The protein is Regulator of G-protein signaling 16 (RGS16) of Bos taurus (Bovine).